A 435-amino-acid polypeptide reads, in one-letter code: Plant UBX domain-containing protein 6 (435 aa).

Disordered regions lie at residues 1-150 (MDVN…PQKV), 208-265 (ENYT…EDQP), and 311-352 (PTTT…SMSS). Over residues 49-62 (TSSFSTFDGSSGYS) the composition is skewed to low complexity. Over residues 112–129 (AVEHYGGEENRAIERPEQ) the composition is skewed to basic and acidic residues. Over residues 130–141 (SSRSMSEETVSS) the composition is skewed to low complexity. In terms of domain architecture, SEP 1 spans 150-211 (VFTHTVTSWS…IISREEENYT (62 aa)). Residues 211–222 (TESQAGSDSAST) are compositionally biased toward polar residues. Over residues 231 to 242 (RAKESAIERSEQ) the composition is skewed to basic and acidic residues. The segment covering 252–265 (DSAELQEQQQEDQP) has biased composition (acidic residues). The SEP 2 domain occupies 268–343 (VVTYTVTIWR…ESTSTEPPLT (76 aa)). Low complexity-rich tracts occupy residues 312–323 (TTTRSTSCSSQT) and 333–349 (SESTSTEPPLTTTQPPS). In terms of domain architecture, UBX spans 357 to 434 (PAAPTTSIQL…GIANSVLVQK (78 aa)).

This is Plant UBX domain-containing protein 6 from Arabidopsis thaliana (Mouse-ear cress).